The chain runs to 878 residues: Interleukin-3 receptor class 2 subunit beta (878 aa).

A signal peptide spans 1–22 (MDQQMALTWGLCYMALVALCWG). Residues 23–440 (HEVTEEEETV…SNEYTWTTDW (418 aa)) lie on the Extracellular side of the membrane. Cysteines 39 and 49 form a disulfide. A glycan (N-linked (GlcNAc...) asparagine) is linked at Asn62. An intrachain disulfide couples Cys78 to Cys95. The 106-residue stretch at 139 to 244 (PPKDIHISPS…PEVHWDSQPG (106 aa)) folds into the Fibronectin type-III 1 domain. Residues 223–244 (GSSLSGRPSRWSPEVHWDSQPG) form a disordered region. Cystine bridges form between Cys254/Cys264 and Cys293/Cys310. The Fibronectin type-III 2 domain maps to 343-438 (QMEPPILNQT…EWSNEYTWTT (96 aa)). A glycan (N-linked (GlcNAc...) asparagine) is linked at Asn350. The WSXWS motif signature appears at 427–431 (WSEWS). The helical transmembrane segment at 441 to 462 (VMPTLWIVLILVFLIFTLLLAL) threads the bilayer. The Cytoplasmic segment spans residues 463–878 (HFGRVYGYRT…AIQFFKSLKY (416 aa)). Positions 476 to 484 (WKEKIPNPS) match the Box 1 motif motif. 2 disordered regions span residues 539 to 620 (LTIE…GGSL) and 660 to 709 (SSLE…MASD). Polar residues predominate over residues 554 to 570 (PDTTPAASSESTEQLPN). Positions 671–689 (EPKENPPVELSVEKQEARD) are enriched in basic and acidic residues. Ser752 and Ser754 each carry phosphoserine. Tyr765 is subject to Phosphotyrosine. 2 disordered regions span residues 771 to 810 (SVSQ…PHPE) and 829 to 849 (PGSL…ETED).

This sequence belongs to the type I cytokine receptor family. Type 4 subfamily. Heterodimer of an alpha and a beta subunit.

It is found in the membrane. In mouse, there are two classes of high-affinity IL3 receptors. One contains this IL3-specific beta subunit and the other contains the beta subunit also shared by high-affinity IL5 and GM-CSF receptors. The chain is Interleukin-3 receptor class 2 subunit beta (Csf2rb2) from Mus musculus (Mouse).